We begin with the raw amino-acid sequence, 468 residues long: E3 ubiquitin-protein ligase TRIM11 (468 aa).

The segment at 16–57 (CAICLDYFTDPVMTDCGHNFCRECIRRCWGQPEGPYACPECR) adopts an RING-type zinc-finger fold. Ser-85 carries the phosphoserine modification. Residues 87–128 (VPQGVCAAHREPLAAFCGDELRLLCAACERSGEHWAHRVRPL) form a B box-type zinc finger. Residues Cys-92, His-95, Cys-114, and His-120 each contribute to the Zn(2+) site. A coiled-coil region spans residues 128-233 (LQDAAEDLKS…QLAELITELE (106 aa)). In terms of domain architecture, B30.2/SPRY spans 268–461 (EMRTVCRVPG…MTICRLKGGP (194 aa)). A Glycyl lysine isopeptide (Lys-Gly) (interchain with G-Cter in ubiquitin) cross-link involves residue Lys-458.

The protein belongs to the TRIM/RBCC family. Binds cytoplasmic tail of integrin alpha-1. Interacts with the HN peptide. Interacts with PHOX2B. Interacts (when autoubiquitinated) with SQSTM1/p62; promoting AIM2 recruitment to autophagosomes. Interacts with AIM2; promoting its autophagy-dependent degradation. In terms of processing, autoubiquitinated upon DNA stimulation; autoubiquitination promotes interaction with SQSTM1/p62 and recruitment of AIM2 to autophagosomes.

The protein localises to the cytoplasm. It localises to the nucleus. It catalyses the reaction S-ubiquitinyl-[E2 ubiquitin-conjugating enzyme]-L-cysteine + [acceptor protein]-L-lysine = [E2 ubiquitin-conjugating enzyme]-L-cysteine + N(6)-ubiquitinyl-[acceptor protein]-L-lysine.. The protein operates within protein modification; protein ubiquitination. Functionally, E3 ubiquitin-protein ligase that promotes the degradation of insoluble ubiquitinated proteins, including insoluble PAX6, poly-Gln repeat expanded HTT and poly-Ala repeat expanded ARX. Mediates PAX6 ubiquitination leading to proteasomal degradation, thereby modulating cortical neurogenesis. May also inhibit PAX6 transcriptional activity, possibly in part by preventing the binding of PAX6 to its consensus sequences. May contribute to the regulation of the intracellular level of HN (humanin) or HN-containing proteins through the proteasomal degradation pathway. Mediates MED15 ubiquitination leading to proteasomal degradation. May contribute to the innate restriction of retroviruses. Upon overexpression, reduces HIV-1 and murine leukemia virus infectivity, by suppressing viral gene expression. Antiviral activity depends on a functional E3 ubiquitin-protein ligase domain. May regulate TRIM5 turnover via the proteasome pathway, thus counteracting the TRIM5-mediated cross-species restriction of retroviral infection at early stages of the retroviral life cycle. Acts as an inhibitor of the AIM2 inflammasome by promoting autophagy-dependent degradation of AIM2. Mechanistically, undergoes autoubiquitination upon DNA stimulation, promoting interaction with AIM2 and SQSTM1/p62, leading to AIM2 recruitment to autophagosomes. This chain is E3 ubiquitin-protein ligase TRIM11 (TRIM11), found in Bos taurus (Bovine).